Consider the following 349-residue polypeptide: Homeobox-leucine zipper protein HOX7 (349 aa).

The tract at residues 42–186 (RATRRDEQDD…PKQKSDLANR (145 aa)) is disordered. Polar residues-rich tracts occupy residues 89 to 99 (SAETGSANSEM) and 121 to 135 (SSPS…RQQV). Positions 150 to 209 (GARKKLRLSKEQSSFLEDSFKEHSTLTPKQKSDLANRLNLRPRQVEVWFQNRRARTKLKQ) form a DNA-binding region, homeobox. Residues 167–183 (DSFKEHSTLTPKQKSDL) show a composition bias toward basic and acidic residues. The tract at residues 208-252 (KQTEVDCEHLKRCCERLTRENRRLQREVAELRGTLRTTTSSYPPL) is leucine-zipper.

This sequence belongs to the HD-ZIP homeobox family. Class II subfamily. In terms of assembly, homodimer. May form a heterodimer with HOX1, HOX2 or HOX3. As to expression, expressed in seedlings, roots, leaves, nodes, internodes, flowers and embryo.

It localises to the nucleus. Its function is as follows. Probable transcription factor that binds to the DNA sequence 5'-CAAT[GC]ATTG-3'. This is Homeobox-leucine zipper protein HOX7 (HOX7) from Oryza sativa subsp. japonica (Rice).